A 219-amino-acid chain; its full sequence is Arginine transport system permease protein ArtQ (219 aa).

The next 5 helical transmembrane spans lie at 19–39 (LAIT…LGIV), 51–73 (FIWI…QLMI), 88–108 (QFWA…SEII), 149–169 (AIVN…VIGL), and 187–207 (LEPL…LTFI). One can recognise an ABC transmembrane type-1 domain in the interval 19-208 (LAITLKIVVV…VLVLILTFIG (190 aa)).

The protein belongs to the binding-protein-dependent transport system permease family. HisMQ subfamily.

The protein resides in the cell membrane. Functionally, part of a binding-protein-dependent transport system for arginine. Probably responsible for the translocation of the substrate across the membrane. This chain is Arginine transport system permease protein ArtQ (artQ), found in Bacillus subtilis (strain 168).